A 213-amino-acid polypeptide reads, in one-letter code: Ephrin-A2 (213 aa).

An N-terminal signal peptide occupies residues 1-24; it reads MAPAQRPLLPLLLLLLPLPPPPFA. The Ephrin RBD domain occupies 34-174; it reads SDRYAVYWNR…RLKVYVRPTN (141 aa). Residue Asn-42 is glycosylated (N-linked (GlcNAc...) asparagine). Disulfide bonds link Cys-73–Cys-114 and Cys-102–Cys-163. Asn-174 and Asn-188 each carry an N-linked (GlcNAc...) asparagine glycan. Residue Asn-188 is the site of GPI-anchor amidated asparagine attachment. A propeptide spans 189–213 (removed in mature form); the sequence is NSCSSPGGCRLFLSTIPVLWTLLGS.

This sequence belongs to the ephrin family. As to quaternary structure, binds to the receptor tyrosine kinases EPHA3, EPHA4 and EPHA5. Interacts with EPHA8; activates EPHA8.

It localises to the cell membrane. In terms of biological role, cell surface GPI-bound ligand for Eph receptors, a family of receptor tyrosine kinases which are crucial for migration, repulsion and adhesion during neuronal, vascular and epithelial development. Binds promiscuously Eph receptors residing on adjacent cells, leading to contact-dependent bidirectional signaling into neighboring cells. The signaling pathway downstream of the receptor is referred to as forward signaling while the signaling pathway downstream of the ephrin ligand is referred to as reverse signaling. With the EPHA2 receptor may play a role in bone remodeling through regulation of osteoclastogenesis and osteoblastogenesis. This chain is Ephrin-A2 (EFNA2), found in Homo sapiens (Human).